A 197-amino-acid chain; its full sequence is Guanylate kinase (197 aa).

The 179-residue stretch at 7 to 185 (GLIIILSSPS…TLKKIHEIIV (179 aa)) folds into the Guanylate kinase-like domain. Position 14 to 21 (14 to 21 (SPSGTGKS)) interacts with ATP.

The protein belongs to the guanylate kinase family.

It localises to the cytoplasm. It catalyses the reaction GMP + ATP = GDP + ADP. In terms of biological role, essential for recycling GMP and indirectly, cGMP. The sequence is that of Guanylate kinase from Rickettsia typhi (strain ATCC VR-144 / Wilmington).